A 170-amino-acid polypeptide reads, in one-letter code: MSKLFYAFAVLAVHVLTSSPTTAASNLPVNLVTGPAFTTPAGAAHRRFLRSIHEGEDSLKPSAFSEERTALRAMAYLLKPKQKKLAAALKKSTSKHKLSVAPEKMKSIQVLGDPKNPEREWFKRLYNSKRGDPQTLRKLGQFKTEAQLSRYIKFYDDMLAKAKNVRVQTK.

Positions methionine 1 to alanine 23 are cleaved as a signal peptide. The RxLR-dEER signature appears at arginine 47–arginine 68.

It belongs to the RxLR effector family.

It localises to the secreted. The protein resides in the host cytoplasm. The protein localises to the host nucleus. Effector that is involved in host plant infection. Contributes to virulence during the early infection stage, by inhibiting plant defense responses induced by both PAMP-triggered immunity (PTI) and effector-triggered immunity (ETI). This Phytophthora infestans (strain T30-4) (Potato late blight agent) protein is RxLR effector protein CRE16.